The following is a 157-amino-acid chain: DNA gyrase inhibitor (157 aa).

Belongs to the DNA gyrase inhibitor family. Interacts with DNA gyrase.

It localises to the cytoplasm. In terms of biological role, inhibits the supercoiling activity of DNA gyrase. Acts by inhibiting DNA gyrase at an early step, prior to (or at the step of) binding of DNA by the gyrase. It protects cells against toxins that target DNA gyrase, by inhibiting activity of these toxins and reducing the formation of lethal double-strand breaks in the cell. The polypeptide is DNA gyrase inhibitor (Shigella boydii serotype 18 (strain CDC 3083-94 / BS512)).